A 510-amino-acid polypeptide reads, in one-letter code: Ent-sandaracopimaradiene 3-hydroxylase (510 aa).

The helical transmembrane segment at 4 to 24 threads the bilayer; sequence MLVAGAGAAAVAAVGGLVAAA. Cys-454 provides a ligand contact to heme.

It belongs to the cytochrome P450 family. As to quaternary structure, interacts with the rice dwarf virus (RDV) P2 protein. Heme is required as a cofactor. In terms of tissue distribution, expressed in leaf blades and sheaths, stems and panicles.

Its subcellular location is the membrane. The catalysed reaction is ent-sandaracopimara-8(14),15-diene + reduced [NADPH--hemoprotein reductase] + O2 = ent-sandaracopimaradien-3beta-ol + oxidized [NADPH--hemoprotein reductase] + H2O + H(+). The enzyme catalyses 9beta-pimara-7,15-diene + reduced [NADPH--hemoprotein reductase] + O2 = 9beta-pimara-7,15-diene-3beta-ol + oxidized [NADPH--hemoprotein reductase] + H2O + H(+). In terms of biological role, catalyzes the hydroxylation of ent-sandaracopimaradiene at the C3alpha position to produce ent-3beta-hydroxy-sandaracopimaradiene, an intermediates for the biosynthesis of oryzalexin D and oryzalexin E phytoalexins. Catalyzes the hydroxylation of ent-cassadiene at the C3alpha position to produce 3alpha-hydroxy-ent-cassadiene, which may be an intermediate for the biosynthesis of phytocassane phytoalexins. Catalyzes the hydroxylation of syn-pimaradiene (9-beta-pimara-7,15-diene) at the C3beta position to produce 3-beta-syn-pimaradiene. Can hydroxylate ent-kaurene in vitro, but the product is not ent-kauren-19-ol as expected for ent-kaurene oxidase activity. The chain is Ent-sandaracopimaradiene 3-hydroxylase from Oryza sativa subsp. japonica (Rice).